Here is a 414-residue protein sequence, read N- to C-terminus: Voltage-gated ClC-type chloride channel ClcB (414 aa).

A run of 11 helical transmembrane segments spans residues 5-25, 54-74, 116-136, 147-167, 169-189, 220-240, 255-275, 292-312, 327-347, 353-373, and 381-401; these read LVIS…FHQA, ALTP…YQRY, SAIG…SVFA, LWVA…PLAG, LFIA…PVVI, VQYF…PLFL, LLPP…SLIF, TPPG…AVLA, LFVG…WPVL, LLMA…APIM, and MTGE…ATTI.

It belongs to the chloride channel (TC 2.A.49) family. ClcB subfamily.

It is found in the cell inner membrane. Functionally, probably acts as an electrical shunt for an outwardly-directed proton pump that is linked to amino acid decarboxylation, as part of the extreme acid resistance (XAR) response. This Yersinia pestis protein is Voltage-gated ClC-type chloride channel ClcB.